The chain runs to 451 residues: NAC domain containing protein 52 (451 aa).

The disordered stretch occupies residues 1–21 (MGRESVAVVTAPPSATAPGTA). An NAC domain is found at 27–178 (LAPGFRFHPT…AYVLCRVFHK (152 aa)). A DNA-binding region spans residues 126 to 184 (LGMKKTLVFHSGRAPDGLRTNWVMHEYRLVEYETEKNGNLVQDAYVLCRVFHKNNIGPP). Disordered regions lie at residues 255–337 (DQQN…TTTT) and 370–400 (KKEK…KVND). Positions 256-270 (QQNHHENDLKPEEHN) are enriched in basic and acidic residues. Positions 272–292 (NNNYDENEETLKREQMEEEER) form a coiled coil. A compositionally biased stretch (low complexity) spans 318–337 (ESNNNSSRNTQDHCSSTTTT). The span at 370-384 (KKEKPQQPLRPHKEP) shows a compositional bias: basic and acidic residues. The stretch at 398–446 (VNDLQKEIHQMSVERETFKLEMMSAEAMISILQSRIDALRQENEELKKN) forms a coiled coil.

As to quaternary structure, interacts with JMJ14 and NAC050. As to expression, mostly expressed in floral organs, and, at low levels, in other organs.

The protein localises to the nucleus. Its function is as follows. Transcriptional repressor that binds to the motif 5'-(C/T)A(C/A)G-3' in the promoter of target genes. Also binds to the 5'-CTTGNNNNNCAAG-3' consensus sequence in chromatin. Can bind to the mitochondrial dysfunction motif (MDM) present in the upstream regions of mitochondrial dysfunction stimulon (MDS) genes involved in mitochondrial retrograde regulation (MRR). Together with NAC050 and JMJ14, regulates gene expression and flowering time by associating with the histone demethylase JMJ14, probably by the promotion of RNA-mediated gene silencing. Regulates siRNA-dependent post-transcriptional gene silencing (PTGS) through SGS3 expression modulation. Required during pollen development. This Arabidopsis thaliana (Mouse-ear cress) protein is NAC domain containing protein 52.